Reading from the N-terminus, the 836-residue chain is Translation initiation factor IF-2 (836 aa).

Residues 1–234 are disordered; it reads MSDTDGKKPL…SLAAMKRKQE (234 aa). The span at 18–27 shows a compositional bias: polar residues; that stretch reads SGQVKQSFSH. The segment covering 50-60 has biased composition (low complexity); that stretch reads SGSSTTTSSPS. Residues 88 to 156 show a composition bias toward basic and acidic residues; the sequence is KLREVEDAKR…ATRRAEEAKR (69 aa). The segment covering 167-176 has biased composition (low complexity); it reads PAESRASAPP. Basic and acidic residues predominate over residues 185-206; sequence SRKEREREADRDRTTKKDDSRR. The 169-residue stretch at 333 to 501 folds into the tr-type G domain; the sequence is PRPPIITIMG…NIALQAEILD (169 aa). Positions 342–349 are G1; sequence GHVDHGKT. 342–349 provides a ligand contact to GTP; sequence GHVDHGKT. Residues 367–371 form a G2 region; that stretch reads GITQH. A G3 region spans residues 389-392; the sequence is DTPG. GTP contacts are provided by residues 389–393 and 443–446; these read DTPGH and NKID. Residues 443–446 are G4; sequence NKID. Residues 479–481 form a G5 region; that stretch reads SAK.

It belongs to the TRAFAC class translation factor GTPase superfamily. Classic translation factor GTPase family. IF-2 subfamily.

It is found in the cytoplasm. One of the essential components for the initiation of protein synthesis. Protects formylmethionyl-tRNA from spontaneous hydrolysis and promotes its binding to the 30S ribosomal subunits. Also involved in the hydrolysis of GTP during the formation of the 70S ribosomal complex. The chain is Translation initiation factor IF-2 from Cereibacter sphaeroides (strain ATCC 17029 / ATH 2.4.9) (Rhodobacter sphaeroides).